The primary structure comprises 188 residues: Adenine phosphoribosyltransferase (188 aa).

134–138 is a binding site for AMP; it reads ATGGS.

This sequence belongs to the purine/pyrimidine phosphoribosyltransferase family. Homodimer. It depends on Mg(2+) as a cofactor.

The protein resides in the cytoplasm. It localises to the nucleus. It carries out the reaction AMP + diphosphate = 5-phospho-alpha-D-ribose 1-diphosphate + adenine. The protein operates within purine metabolism; AMP biosynthesis via salvage pathway; AMP from adenine: step 1/1. In terms of biological role, catalyzes a salvage reaction resulting in the formation of AMP, that is energically less costly than de novo synthesis. The chain is Adenine phosphoribosyltransferase (APT1) from Candida albicans (strain SC5314 / ATCC MYA-2876) (Yeast).